A 195-amino-acid chain; its full sequence is 3-isopropylmalate dehydratase small subunit (195 aa).

It belongs to the LeuD family. LeuD type 1 subfamily. As to quaternary structure, heterodimer of LeuC and LeuD.

The catalysed reaction is (2R,3S)-3-isopropylmalate = (2S)-2-isopropylmalate. The protein operates within amino-acid biosynthesis; L-leucine biosynthesis; L-leucine from 3-methyl-2-oxobutanoate: step 2/4. In terms of biological role, catalyzes the isomerization between 2-isopropylmalate and 3-isopropylmalate, via the formation of 2-isopropylmaleate. This Frankia alni (strain DSM 45986 / CECT 9034 / ACN14a) protein is 3-isopropylmalate dehydratase small subunit.